We begin with the raw amino-acid sequence, 189 residues long: Probable nicotinate-nucleotide adenylyltransferase (189 aa).

It belongs to the NadD family.

The catalysed reaction is nicotinate beta-D-ribonucleotide + ATP + H(+) = deamido-NAD(+) + diphosphate. The protein operates within cofactor biosynthesis; NAD(+) biosynthesis; deamido-NAD(+) from nicotinate D-ribonucleotide: step 1/1. Its function is as follows. Catalyzes the reversible adenylation of nicotinate mononucleotide (NaMN) to nicotinic acid adenine dinucleotide (NaAD). The polypeptide is Probable nicotinate-nucleotide adenylyltransferase (Ruegeria sp. (strain TM1040) (Silicibacter sp.)).